Consider the following 251-residue polypeptide: 5'-nucleotidase SurE (251 aa).

A divalent metal cation contacts are provided by Asp8, Asp9, Ser39, and Asn91.

This sequence belongs to the SurE nucleotidase family. It depends on a divalent metal cation as a cofactor.

The protein resides in the cytoplasm. The catalysed reaction is a ribonucleoside 5'-phosphate + H2O = a ribonucleoside + phosphate. In terms of biological role, nucleotidase that shows phosphatase activity on nucleoside 5'-monophosphates. This is 5'-nucleotidase SurE from Halorhodospira halophila (strain DSM 244 / SL1) (Ectothiorhodospira halophila (strain DSM 244 / SL1)).